The sequence spans 448 residues: Asparagine--tRNA ligase (448 aa).

This sequence belongs to the class-II aminoacyl-tRNA synthetase family. In terms of assembly, homodimer.

It is found in the cytoplasm. The catalysed reaction is tRNA(Asn) + L-asparagine + ATP = L-asparaginyl-tRNA(Asn) + AMP + diphosphate + H(+). The sequence is that of Asparagine--tRNA ligase from Streptococcus thermophilus (strain ATCC BAA-250 / LMG 18311).